We begin with the raw amino-acid sequence, 365 residues long: MQVQLTNRQQHILWATVRHYIATAEPVGSKALVEEYDLGVSSATIRNVMGVLEKSGLLYQPHTSAGRVPSDSGYRIYVDQLITPSLRDTTRTEVLAKEVESALQQHLQWEDWSLEILLQGAAQILASLSGCISLITMPQTNTASVRHLQLVQIETGRIMLILVTDSYETHSKLMDLPPARSETKPDPEVIDRELQIVSNFLNSHLRGRSLLEISTLDWSQLDREFQSYGEFLKNSVAELAHRSAAPAATQIMVRGLAEVLRQPEFSQLQQVKTIIQLLEEEQEQLWRLIFEEPELEDTHKSKVTVRIGAENPLEPIRTCSLISSTYRRGGVPLGSVGVLGPTRLDYESAIAVVAAAADYLSEAFS.

This sequence belongs to the HrcA family.

Negative regulator of class I heat shock genes (grpE-dnaK-dnaJ and groELS operons). Prevents heat-shock induction of these operons. The sequence is that of Heat-inducible transcription repressor HrcA from Trichormus variabilis (strain ATCC 29413 / PCC 7937) (Anabaena variabilis).